Reading from the N-terminus, the 554-residue chain is Putative acyl-coenzyme A synthetase (554 aa).

195 to 206 (LLYSSGTTGPPK) lines the AMP pocket.

It belongs to the ATP-dependent AMP-binding enzyme family.

The sequence is that of Putative acyl-coenzyme A synthetase from Emericella nidulans (strain FGSC A4 / ATCC 38163 / CBS 112.46 / NRRL 194 / M139) (Aspergillus nidulans).